The following is a 201-amino-acid chain: Outer-membrane lipoprotein carrier protein (201 aa).

A signal peptide spans M1–A21.

This sequence belongs to the LolA family. As to quaternary structure, monomer.

The protein resides in the periplasm. Its function is as follows. Participates in the translocation of lipoproteins from the inner membrane to the outer membrane. Only forms a complex with a lipoprotein if the residue after the N-terminal Cys is not an aspartate (The Asp acts as a targeting signal to indicate that the lipoprotein should stay in the inner membrane). The polypeptide is Outer-membrane lipoprotein carrier protein (Proteus mirabilis (strain HI4320)).